The sequence spans 477 residues: tRNA-2-methylthio-N(6)-dimethylallyladenosine synthase (477 aa).

One can recognise an MTTase N-terminal domain in the interval 3–120; that stretch reads KKLFIKTWGC…LPEMINQIKG (118 aa). The [4Fe-4S] cluster site is built by Cys-12, Cys-49, Cys-83, Cys-157, Cys-161, and Cys-164. The Radical SAM core domain occupies 143–375; that stretch reads KAEGPTAFVS…QNRITQQALR (233 aa). The 64-residue stretch at 378 to 441 folds into the TRAM domain; the sequence is RNMIDSEQRV…ANSLRGDVLR (64 aa).

It belongs to the methylthiotransferase family. MiaB subfamily. As to quaternary structure, monomer. It depends on [4Fe-4S] cluster as a cofactor.

It is found in the cytoplasm. It catalyses the reaction N(6)-dimethylallyladenosine(37) in tRNA + (sulfur carrier)-SH + AH2 + 2 S-adenosyl-L-methionine = 2-methylsulfanyl-N(6)-dimethylallyladenosine(37) in tRNA + (sulfur carrier)-H + 5'-deoxyadenosine + L-methionine + A + S-adenosyl-L-homocysteine + 2 H(+). Its function is as follows. Catalyzes the methylthiolation of N6-(dimethylallyl)adenosine (i(6)A), leading to the formation of 2-methylthio-N6-(dimethylallyl)adenosine (ms(2)i(6)A) at position 37 in tRNAs that read codons beginning with uridine. This Pseudoalteromonas atlantica (strain T6c / ATCC BAA-1087) protein is tRNA-2-methylthio-N(6)-dimethylallyladenosine synthase.